Reading from the N-terminus, the 1028-residue chain is Endosome/lysosome-associated apoptosis and autophagy regulator family member 2 (1028 aa).

A signal peptide spans 1 to 47 (MLLLTLRRAKGRDRGRPAGGPRRALSLPWSPAWICCWALAGCQAVWA). The Extracellular portion of the chain corresponds to 48–928 (GDSSSSGRPL…TCETVDFWLK (881 aa)). Residue asparagine 168 is glycosylated (N-linked (GlcNAc...) asparagine). 3 disulfide bridges follow: cysteine 292-cysteine 309, cysteine 322-cysteine 345, and cysteine 325-cysteine 357. Asparagine 404 and asparagine 690 each carry an N-linked (GlcNAc...) asparagine glycan. The region spanning 671–876 (SDCFFYHEKE…LWESAEACPL (206 aa)) is the MRH domain. 4 disulfide bridges follow: cysteine 673–cysteine 719, cysteine 729–cysteine 757, cysteine 826–cysteine 862, and cysteine 838–cysteine 874. A helical membrane pass occupies residues 929-949 (VGAGVGAFTAVLLVALTCYFW). Topologically, residues 950-1028 (KKNQKLEYKY…QLKSSRCPNI (79 aa)) are cytoplasmic. Serine 1017 is modified (phosphoserine).

The protein belongs to the ELAPOR family.

It localises to the cell membrane. Functionally, functions as a regulator of the BMP signaling pathway and may be involved in epidermal differentiation. The chain is Endosome/lysosome-associated apoptosis and autophagy regulator family member 2 from Mus musculus (Mouse).